The following is a 1457-amino-acid chain: Eye-specific diacylglycerol kinase (1457 aa).

Disordered stretches follow at residues 1–123, 136–177, and 207–339; these read MQQQ…SSEA, RSHS…PPCI, and YSNT…QPTT. Composition is skewed to low complexity over residues 22–62, 98–115, and 141–154; these read SATT…LRTT, SQRA…SSAS, and DSAT…DSGT. The span at 214–253 shows a compositional bias: acidic residues; it reads ASEDEDEVEGHNAEEEEEGSAAIEDAEEETTEAATEEADE. Residues 254 to 266 show a composition bias toward basic and acidic residues; the sequence is DPRTEVESEHDHD. The span at 294-303 shows a compositional bias: basic residues; that stretch reads RLPRQMRRHT. 2 consecutive Phorbol-ester/DAG-type zinc fingers follow at residues 591 to 641 and 661 to 724; these read HYWK…TLAC and HHWV…GEEC. Residues 758–799 are disordered; it reads NNAASGSGGGGAGGGAGGGGGKSKKQTQRRQKGKEEKKEPRA. A compositionally biased stretch (gly residues) spans 763–778; sequence GSGGGGAGGGAGGGGG. The segment covering 779–789 has biased composition (basic residues); it reads KSKKQTQRRQK. The DAGKc domain occupies 808–944; the sequence is PEVIPVIVFI…MDRWRVKVTP (137 aa). Residues 1264 to 1302 are disordered; it reads TPDQERSFAAFSQRQAQNERRQMDQAQGRGPGSTDEDLQ. ANK repeat units follow at residues 1320-1349, 1353-1382, 1389-1418, and 1422-1451; these read QTSD…SLQS, NGQT…RRLI, LGQT…HLDT, and GGNT…TQPV.

The protein belongs to the eukaryotic diacylglycerol kinase family. As to expression, expressed specifically in adult eye.

Its subcellular location is the membrane. It catalyses the reaction a 1,2-diacyl-sn-glycerol + ATP = a 1,2-diacyl-sn-glycero-3-phosphate + ADP + H(+). Required for the maintenance of phospholipid turnover within the photoreceptor. The sequence is that of Eye-specific diacylglycerol kinase (rdgA) from Drosophila melanogaster (Fruit fly).